We begin with the raw amino-acid sequence, 650 residues long: Epithelial sodium channel subunit gamma (650 aa).

The Cytoplasmic portion of the chain corresponds to 1 to 55; it reads MAPGEKIKAKIKKNLPVRGPQAPTIKDLMHWYCMNTNTHGCRRIVVSRGRLRRLL. Residues 56 to 76 traverse the membrane as a helical segment; it reads WIAFTLTAVALIIWQCALLVF. The Extracellular portion of the chain corresponds to 77–542; it reads SFYTVSVSIK…GGQLGLWMSC (466 aa). 8 disulfides stabilise this stretch: Cys100–Cys284, Cys208–Cys215, Cys261–Cys268, Cys373–Cys458, Cys395–Cys454, Cys399–Cys450, Cys408–Cys435, and Cys410–Cys424. The gating release of inhibition by proteolysis (GRIP); protease-sensitive region that is responsible for the proteolytic activation of the channel stretch occupies residues 135-222; sequence RKRREAGSMP…SDCATYTFSS (88 aa). A glycan (N-linked (GlcNAc...) asparagine) is linked at Asn210. N-linked (GlcNAc...) asparagine glycosylation is present at Asn272. The N-linked (GlcNAc...) asparagine glycan is linked to Asn498. The helical transmembrane segment at 543–563 threads the bilayer; it reads SVVCVIEIIEVFFIDFFSIIA. Over 564–650 the chain is Cytoplasmic; sequence RRQWHKAKDW…LTDTQLTNEL (87 aa). A disordered region spans residues 577–628; sequence RQTPPSTETPSSRQGQDNPALDTDDDLPTFTSAMRLPPAPGSTVPGTPPPRY. A compositionally biased stretch (polar residues) spans 579 to 593; the sequence is TPPSTETPSSRQGQD. The PY motif; mediates interaction, ubiquitination and inhibition by NEDD4 and NEDD4L signature appears at 624-628; that stretch reads PPPRY. The PY motif; recruits WW domain-containing proteins and is thereby required for ubiquitination and inhibition of the channel by NEDD4 and NEDD4L signature appears at 624–628; sequence PPPRY.

The protein belongs to the amiloride-sensitive sodium channel (TC 1.A.6) family. SCNN1G subfamily. Component of the heterotrimeric epithelial sodium channel (ENaC) composed of an alpha/SCNN1A, a beta/SCNN1B and a gamma/SCNN1G subunit. Interacts with WWP1 (via WW domains). Interacts with WWP2 (via WW domains); inhibits the channel. Interacts with the full-length immature form of PCSK9 (pro-PCSK9); inhibits ENaC by promoting its proteasomal degradation. Interacts with BPIFA1; the interaction is indirect via SCNN1B and inhibits the proteolytic maturation of SCNN1A and SCNN1G and the activation of ENaC. In terms of processing, phosphorylated on serine and threonine residues. Aldosterone and insulin increase the basal level of phosphorylation. Ubiquitinated. Can be ubiquitinated at multiple sites and undergo monoubiquitination and polyubiquitination. Ubiquitination by NEDD4 or NEDD4L inhibits the ENaC channel through endocytosis, intracellular retention and degradation of its individual subunits. Post-translationally, ENaC is activated through the proteolytic maturation of its subunits. Furin cleaves the SCNN1G subunit first, followed by cleavage by prostasin (PRSS8), which results in a stepwise increase in the open probability of the channel due to the release of an inhibitory tract. BPIFA1, which is recruited by the SCNN1B subunit, prevents the proteolytic activation of ENaC. In terms of processing, N-glycosylated. N-linked glycans are processed to complex type during ENaC complex assembly and transport to the plasma membrane.

It localises to the apical cell membrane. It carries out the reaction Na(+)(in) = Na(+)(out). With respect to regulation, originally identified and characterized by its inhibition by the diuretic drug amiloride. Its function is as follows. This is one of the three pore-forming subunits of the heterotrimeric epithelial sodium channel (ENaC), a critical regulator of sodium balance and fluid homeostasis. ENaC operates in epithelial tissues, where it mediates the electrodiffusion of sodium ions from extracellular fluid through the apical membrane of cells, with water following osmotically. It plays a key role in maintaining sodium homeostasis through electrogenic sodium reabsorption in the kidneys. Additionally, ENaC is essential for airway surface liquid homeostasis, which is crucial for proper mucus clearance. The protein is Epithelial sodium channel subunit gamma of Rattus norvegicus (Rat).